A 113-amino-acid polypeptide reads, in one-letter code: ATP-dependent Clp protease adapter protein ClpS (113 aa).

The segment covering 1–11 (MHRDLHMMSDR) has biased composition (basic and acidic residues). Residues 1 to 25 (MHRDLHMMSDRSEDDGDTSILTATK) are disordered.

This sequence belongs to the ClpS family. In terms of assembly, binds to the N-terminal domain of the chaperone ClpA.

Its function is as follows. Involved in the modulation of the specificity of the ClpAP-mediated ATP-dependent protein degradation. In Roseobacter denitrificans (strain ATCC 33942 / OCh 114) (Erythrobacter sp. (strain OCh 114)), this protein is ATP-dependent Clp protease adapter protein ClpS.